The primary structure comprises 350 residues: Hydroxymethylglutaryl-CoA synthase (350 aa).

Catalysis depends on Glu83, which acts as the Proton donor/acceptor. The active-site Acyl-thioester intermediate is the Cys115. Cys115 and Thr156 together coordinate (3S)-3-hydroxy-3-methylglutaryl-CoA. Arg204 contacts CoA. (3S)-3-hydroxy-3-methylglutaryl-CoA is bound by residues Thr206 and His239. His239 functions as the Proton donor/acceptor in the catalytic mechanism. Lys244 provides a ligand contact to CoA. (3S)-3-hydroxy-3-methylglutaryl-CoA contacts are provided by Asn271 and Ser301.

It belongs to the thiolase-like superfamily. Archaeal HMG-CoA synthase family. As to quaternary structure, interacts with acetoacetyl-CoA thiolase that catalyzes the precedent step in the pathway and with a DUF35 protein. The acetoacetyl-CoA thiolase/HMG-CoA synthase complex channels the intermediate via a fused CoA-binding site, which allows for efficient coupling of the endergonic thiolase reaction with the exergonic HMGCS reaction.

It catalyses the reaction acetoacetyl-CoA + acetyl-CoA + H2O = (3S)-3-hydroxy-3-methylglutaryl-CoA + CoA + H(+). The protein operates within metabolic intermediate biosynthesis; (R)-mevalonate biosynthesis; (R)-mevalonate from acetyl-CoA: step 2/3. Its function is as follows. Catalyzes the condensation of acetyl-CoA with acetoacetyl-CoA to form 3-hydroxy-3-methylglutaryl-CoA (HMG-CoA). Functions in the mevalonate (MVA) pathway leading to isopentenyl diphosphate (IPP), a key precursor for the biosynthesis of isoprenoid compounds that are building blocks of archaeal membrane lipids. This Thermococcus sibiricus (strain DSM 12597 / MM 739) protein is Hydroxymethylglutaryl-CoA synthase.